A 600-amino-acid chain; its full sequence is UvrABC system protein C (600 aa).

A GIY-YIG domain is found at 15–100; sequence NSAGVYEYFN…IKQLHPKYNI (86 aa). In terms of domain architecture, UVR spans 203–238; sequence SVLLKNLEKQMLVLAQNENYEEAAKIRDQIATIKDL.

This sequence belongs to the UvrC family. As to quaternary structure, interacts with UvrB in an incision complex.

The protein resides in the cytoplasm. Functionally, the UvrABC repair system catalyzes the recognition and processing of DNA lesions. UvrC both incises the 5' and 3' sides of the lesion. The N-terminal half is responsible for the 3' incision and the C-terminal half is responsible for the 5' incision. The chain is UvrABC system protein C from Campylobacter jejuni subsp. doylei (strain ATCC BAA-1458 / RM4099 / 269.97).